Here is a 209-residue protein sequence, read N- to C-terminus: Kynurenine formamidase (209 aa).

Residue Trp20 coordinates substrate. Residues His50, His54, and Asp56 each contribute to the Zn(2+) site. His60 serves as the catalytic Proton donor/acceptor. Positions 161 and 173 each coordinate Zn(2+).

This sequence belongs to the Cyclase 1 superfamily. KynB family. As to quaternary structure, homodimer. Zn(2+) serves as cofactor.

It carries out the reaction N-formyl-L-kynurenine + H2O = L-kynurenine + formate + H(+). It participates in amino-acid degradation; L-tryptophan degradation via kynurenine pathway; L-kynurenine from L-tryptophan: step 2/2. In terms of biological role, catalyzes the hydrolysis of N-formyl-L-kynurenine to L-kynurenine, the second step in the kynurenine pathway of tryptophan degradation. This Bacillus thuringiensis (strain Al Hakam) protein is Kynurenine formamidase.